Here is a 595-residue protein sequence, read N- to C-terminus: Cyclin-dependent kinase-like 3 (595 aa).

Residues 4–286 form the Protein kinase domain; the sequence is YETLGKVGEG…STDLLRHDYF (283 aa). Residues 10 to 18 and lysine 33 each bind ATP; that span reads VGEGSYGTV. Positions 45 to 51 match the [NKR]KIAxRE motif; the sequence is KIATREI. The active-site Proton acceptor is the aspartate 125. The residue at position 158 (threonine 158) is a Phosphothreonine. Residue tyrosine 160 is modified to Phosphotyrosine. Disordered stretches follow at residues 362–427, 448–513, and 551–586; these read VIKA…PHAG, SSNL…NKRK, and RESK…GKNL. A compositionally biased stretch (basic and acidic residues) spans 368–386; the sequence is GKGDVPDQKKPEYEGDHRQ. Polar residues predominate over residues 387 to 397; it reads QGTADDTQPSS. Low complexity predominate over residues 448–457; it reads SSNLSHPNSR. Polar residues-rich tracts occupy residues 468–491 and 499–509; these read SSQT…QVQT and RTGQNDQISSG. Residues 570-585 show a composition bias toward basic and acidic residues; the sequence is NQEKQEGGDGDCEGKN.

Belongs to the protein kinase superfamily. CMGC Ser/Thr protein kinase family. CDC2/CDKX subfamily.

It is found in the cytoplasm. The catalysed reaction is L-seryl-[protein] + ATP = O-phospho-L-seryl-[protein] + ADP + H(+). It catalyses the reaction L-threonyl-[protein] + ATP = O-phospho-L-threonyl-[protein] + ADP + H(+). The chain is Cyclin-dependent kinase-like 3 from Mus musculus (Mouse).